The following is a 206-amino-acid chain: Transmembrane emp24 domain-containing protein bai (206 aa).

Residues 1–20 (MARAALIVCLLMACAWSSHA) form the signal peptide. The Lumenal portion of the chain corresponds to 21–172 (VMFKLSPNTQ…RDTNEKTNSR (152 aa)). Residues 30–140 (QKCLKEDIQA…LKPLEVDLKR (111 aa)) form the GOLD domain. Residues 173-193 (VLFFSIFSMCCLLGLATWQVL) form a helical membrane-spanning segment. The Cytoplasmic segment spans residues 194–206 (YLRRYFKAKKLIE).

Belongs to the EMP24/GP25L family.

It is found in the membrane. Its function is as follows. Eca and bai are essential, though not redundant, for dorsoventral patterning of the embryo. Specifically required during early embryogenesis for the activity of maternal tkv, while the zygotic tkv is not affected. The chain is Transmembrane emp24 domain-containing protein bai from Drosophila erecta (Fruit fly).